The sequence spans 200 residues: 3-isopropylmalate dehydratase small subunit (200 aa).

Belongs to the LeuD family. LeuD type 1 subfamily. Heterodimer of LeuC and LeuD.

The enzyme catalyses (2R,3S)-3-isopropylmalate = (2S)-2-isopropylmalate. Its pathway is amino-acid biosynthesis; L-leucine biosynthesis; L-leucine from 3-methyl-2-oxobutanoate: step 2/4. Its function is as follows. Catalyzes the isomerization between 2-isopropylmalate and 3-isopropylmalate, via the formation of 2-isopropylmaleate. This Pseudarthrobacter chlorophenolicus (strain ATCC 700700 / DSM 12829 / CIP 107037 / JCM 12360 / KCTC 9906 / NCIMB 13794 / A6) (Arthrobacter chlorophenolicus) protein is 3-isopropylmalate dehydratase small subunit.